We begin with the raw amino-acid sequence, 125 residues long: Succinate dehydrogenase assembly factor 3, mitochondrial (125 aa).

The transit peptide at 1–30 directs the protein to the mitochondrion; it reads MPGRHVSRVRALYKRVLQLHRVLPPDLKSL.

This sequence belongs to the complex I LYR family. SDHAF3 subfamily. Interacts with SDHB within an SDHA-SDHB subcomplex.

The protein resides in the mitochondrion matrix. Its function is as follows. Plays an essential role in the assembly of succinate dehydrogenase (SDH), an enzyme complex (also referred to as respiratory complex II) that is a component of both the tricarboxylic acid (TCA) cycle and the mitochondrial electron transport chain, and which couples the oxidation of succinate to fumarate with the reduction of ubiquinone (coenzyme Q) to ubiquinol. Promotes maturation of the iron-sulfur protein subunit SDHB of the SDH catalytic dimer, protecting it from the deleterious effects of oxidants. May act together with SDHAF1. This Homo sapiens (Human) protein is Succinate dehydrogenase assembly factor 3, mitochondrial.